We begin with the raw amino-acid sequence, 179 residues long: Bifunctional protein PyrR (179 aa).

The PRPP-binding motif lies at 100–112 (VILVDDVLFTGRT).

The protein belongs to the purine/pyrimidine phosphoribosyltransferase family. PyrR subfamily. Homodimer and homohexamer; in equilibrium.

It catalyses the reaction UMP + diphosphate = 5-phospho-alpha-D-ribose 1-diphosphate + uracil. In terms of biological role, regulates transcriptional attenuation of the pyrimidine nucleotide (pyr) operon by binding in a uridine-dependent manner to specific sites on pyr mRNA. This disrupts an antiterminator hairpin in the RNA and favors formation of a downstream transcription terminator, leading to a reduced expression of downstream genes. Its function is as follows. Also displays a weak uracil phosphoribosyltransferase activity which is not physiologically significant. This chain is Bifunctional protein PyrR, found in Geobacillus sp. (strain WCH70).